Reading from the N-terminus, the 206-residue chain is ATP phosphoribosyltransferase (206 aa).

The protein belongs to the ATP phosphoribosyltransferase family. Short subfamily. Heteromultimer composed of HisG and HisZ subunits.

The protein resides in the cytoplasm. The enzyme catalyses 1-(5-phospho-beta-D-ribosyl)-ATP + diphosphate = 5-phospho-alpha-D-ribose 1-diphosphate + ATP. Its pathway is amino-acid biosynthesis; L-histidine biosynthesis; L-histidine from 5-phospho-alpha-D-ribose 1-diphosphate: step 1/9. Functionally, catalyzes the condensation of ATP and 5-phosphoribose 1-diphosphate to form N'-(5'-phosphoribosyl)-ATP (PR-ATP). Has a crucial role in the pathway because the rate of histidine biosynthesis seems to be controlled primarily by regulation of HisG enzymatic activity. This is ATP phosphoribosyltransferase from Sulfurovum sp. (strain NBC37-1).